A 473-amino-acid polypeptide reads, in one-letter code: Arginine biosynthesis bifunctional protein ArgJ, mitochondrial (473 aa).

Substrate contacts are provided by Thr201, Lys230, Thr241, Glu328, Asn468, and Thr473. Residue Thr241 is the Nucleophile of the active site.

This sequence belongs to the ArgJ family. As to quaternary structure, heterodimer of an alpha and a beta chain. Post-translationally, the alpha and beta chains are autoproteolytically processed from a single precursor protein within the mitochondrion.

The protein resides in the mitochondrion matrix. The enzyme catalyses N(2)-acetyl-L-ornithine + L-glutamate = N-acetyl-L-glutamate + L-ornithine. The catalysed reaction is L-glutamate + acetyl-CoA = N-acetyl-L-glutamate + CoA + H(+). The protein operates within amino-acid biosynthesis; L-arginine biosynthesis; L-ornithine and N-acetyl-L-glutamate from L-glutamate and N(2)-acetyl-L-ornithine (cyclic): step 1/1. Its pathway is amino-acid biosynthesis; L-arginine biosynthesis; N(2)-acetyl-L-ornithine from L-glutamate: step 1/4. Its function is as follows. Catalyzes two activities which are involved in the cyclic version of arginine biosynthesis: the synthesis of acetylglutamate from glutamate and acetyl-CoA, and of ornithine by transacetylation between acetylornithine and glutamate. In Blastomyces gilchristii (strain SLH14081) (Blastomyces dermatitidis), this protein is Arginine biosynthesis bifunctional protein ArgJ, mitochondrial.